Consider the following 384-residue polypeptide: Geranylgeranyl pyrophosphate synthase (384 aa).

2 disordered regions span residues 1-25 (MVPNANSNTVSLQSPNAIPPRTSST) and 39-78 (RPVPESDWLGQNNTRNRSSSTTAIPLTGMHATGPQDPARY). The segment covering 47 to 62 (LGQNNTRNRSSSTTAI) has biased composition (polar residues). Positions 112, 115, and 144 each coordinate isopentenyl diphosphate. The Mg(2+) site is built by Asp-151 and Asp-155. Arg-160 serves as a coordination point for dimethylallyl diphosphate. Arg-161 contacts isopentenyl diphosphate. Dimethylallyl diphosphate is bound by residues Lys-238, Thr-239, and Gln-272. Asp-275 is a Mg(2+) binding site. The dimethylallyl diphosphate site is built by Asn-279, Lys-289, and Lys-299.

It belongs to the FPP/GGPP synthase family. It depends on Mg(2+) as a cofactor.

It carries out the reaction isopentenyl diphosphate + dimethylallyl diphosphate = (2E)-geranyl diphosphate + diphosphate. The catalysed reaction is isopentenyl diphosphate + (2E)-geranyl diphosphate = (2E,6E)-farnesyl diphosphate + diphosphate. The enzyme catalyses isopentenyl diphosphate + (2E,6E)-farnesyl diphosphate = (2E,6E,10E)-geranylgeranyl diphosphate + diphosphate. Its pathway is secondary metabolite biosynthesis. Its function is as follows. Catalyzes the trans-addition of the 3 molecules of isopentenyl diphosphate (IPP) onto dimethylallyl diphosphate (DMAPP) to form geranylgeranyl pyrophosphate (GGPP). GGPP is a precursor for the biosynthesis of many secondary metabolites, including the indole diterpenes nodulisporic acids (NA). This Hypoxylon pulicicidum protein is Geranylgeranyl pyrophosphate synthase.